We begin with the raw amino-acid sequence, 329 residues long: MDPTTPAWGTESTTMNGNDQALPLLCGKETMISVFLILFIALVGLVGNAFVLWLLGFRMRRNAFSVYVLSLAGADFLFLCFQMTSCLAYLINFFGSISINIPSFFTVMTCAYLAGLSMLSAISTERCLSVLWPIWYRCRRPRHLSAVMCVLLWALSLLLSILEGKFCGFLFSDDDPGWCQTFDFITAAWLMFLFVVLCGSSLALLVRILCGSRSLPLTRLYLTILLTVLIFLLCGLPFGIQWFLILWIWKNSVVLFCHIHPISVVLSSFNSSANPIIYFFVGSFRKQWRLRQPILKLALQRALQDTAEVDHSEGCFSQGTLEMSRSSLV.

The Extracellular segment spans residues 1 to 33; sequence MDPTTPAWGTESTTMNGNDQALPLLCGKETMIS. The chain crosses the membrane as a helical span at residues 34–54; that stretch reads VFLILFIALVGLVGNAFVLWL. Topologically, residues 55 to 63 are cytoplasmic; the sequence is LGFRMRRNA. A helical membrane pass occupies residues 64-84; sequence FSVYVLSLAGADFLFLCFQMT. The Extracellular portion of the chain corresponds to 85 to 96; it reads SCLAYLINFFGS. Residues 97–116 form a helical membrane-spanning segment; that stretch reads ISINIPSFFTVMTCAYLAGL. Over 117–143 the chain is Cytoplasmic; that stretch reads SMLSAISTERCLSVLWPIWYRCRRPRH. A helical transmembrane segment spans residues 144–164; that stretch reads LSAVMCVLLWALSLLLSILEG. Over 165–183 the chain is Extracellular; it reads KFCGFLFSDDDPGWCQTFD. Residues 184–204 form a helical membrane-spanning segment; that stretch reads FITAAWLMFLFVVLCGSSLAL. The Cytoplasmic segment spans residues 205–227; that stretch reads LVRILCGSRSLPLTRLYLTILLT. Residues 228 to 248 traverse the membrane as a helical segment; the sequence is VLIFLLCGLPFGIQWFLILWI. The Extracellular portion of the chain corresponds to 249–263; sequence WKNSVVLFCHIHPIS. Residues 264 to 284 traverse the membrane as a helical segment; that stretch reads VVLSSFNSSANPIIYFFVGSF. Residues 285–329 lie on the Cytoplasmic side of the membrane; sequence RKQWRLRQPILKLALQRALQDTAEVDHSEGCFSQGTLEMSRSSLV.

The protein belongs to the G-protein coupled receptor 1 family. Mas subfamily.

It is found in the cell membrane. Mast cell-specific receptor for basic secretagogues, i.e. cationic amphiphilic drugs, as well as endo- or exogenous peptides, consisting of a basic head group and a hydrophobic core. Recognizes and binds small molecules containing a cyclized tetrahydroisoquinoline (THIQ), such as non-steroidal neuromuscular blocking drugs (NMBDs), including tubocurarine and atracurium. In response to these compounds, mediates pseudo-allergic reactions characterized by histamine release, inflammation and airway contraction. In Macaca mulatta (Rhesus macaque), this protein is Mas-related G-protein coupled receptor member X2 (MRGPRX2).